Here is a 33-residue protein sequence, read N- to C-terminus: Unknown 31.6 kDa protein from 2D-PAGE (33 aa).

This chain is Unknown 31.6 kDa protein from 2D-PAGE, found in Onion yellows phytoplasma.